Reading from the N-terminus, the 902-residue chain is Protein translocase subunit SecA (902 aa).

Residues Gln87, 105–109 (GEGKT), and Asp512 each bind ATP. Residues 851–902 (LARQQQLSHQAPVEELTQGSAAAAQEGRKVGRNDPCPCGSGKKFKHCHGKLQ) form a disordered region. The Zn(2+) site is built by Cys886, Cys888, Cys897, and His898. Residues 892 to 902 (KKFKHCHGKLQ) are compositionally biased toward basic residues.

The protein belongs to the SecA family. Monomer and homodimer. Part of the essential Sec protein translocation apparatus which comprises SecA, SecYEG and auxiliary proteins SecDF-YajC and YidC. Zn(2+) serves as cofactor.

It is found in the cell inner membrane. The protein localises to the cytoplasm. It catalyses the reaction ATP + H2O + cellular proteinSide 1 = ADP + phosphate + cellular proteinSide 2.. In terms of biological role, part of the Sec protein translocase complex. Interacts with the SecYEG preprotein conducting channel. Has a central role in coupling the hydrolysis of ATP to the transfer of proteins into and across the cell membrane, serving both as a receptor for the preprotein-SecB complex and as an ATP-driven molecular motor driving the stepwise translocation of polypeptide chains across the membrane. The chain is Protein translocase subunit SecA from Sodalis glossinidius (strain morsitans).